The following is a 351-amino-acid chain: Probable dual-specificity RNA methyltransferase RlmN (351 aa).

The active-site Proton acceptor is the E102. In terms of domain architecture, Radical SAM core spans 110–339 (DGGRKTICIS…ILNRRSPGKD (230 aa)). C117 and C344 are disulfide-bonded. [4Fe-4S] cluster is bound by residues C124, C128, and C131. S-adenosyl-L-methionine contacts are provided by residues 171 to 172 (GE), S203, 226 to 228 (SLN), and N302. Catalysis depends on C344, which acts as the S-methylcysteine intermediate.

This sequence belongs to the radical SAM superfamily. RlmN family. It depends on [4Fe-4S] cluster as a cofactor.

Its subcellular location is the cytoplasm. The catalysed reaction is adenosine(2503) in 23S rRNA + 2 reduced [2Fe-2S]-[ferredoxin] + 2 S-adenosyl-L-methionine = 2-methyladenosine(2503) in 23S rRNA + 5'-deoxyadenosine + L-methionine + 2 oxidized [2Fe-2S]-[ferredoxin] + S-adenosyl-L-homocysteine. It catalyses the reaction adenosine(37) in tRNA + 2 reduced [2Fe-2S]-[ferredoxin] + 2 S-adenosyl-L-methionine = 2-methyladenosine(37) in tRNA + 5'-deoxyadenosine + L-methionine + 2 oxidized [2Fe-2S]-[ferredoxin] + S-adenosyl-L-homocysteine. Its function is as follows. Specifically methylates position 2 of adenine 2503 in 23S rRNA and position 2 of adenine 37 in tRNAs. This is Probable dual-specificity RNA methyltransferase RlmN from Leptospira borgpetersenii serovar Hardjo-bovis (strain JB197).